Reading from the N-terminus, the 149-residue chain is Large ribosomal subunit protein bL9 (149 aa).

Belongs to the bacterial ribosomal protein bL9 family.

Binds to the 23S rRNA. This Helicobacter pylori (strain J99 / ATCC 700824) (Campylobacter pylori J99) protein is Large ribosomal subunit protein bL9.